The following is a 125-amino-acid chain: MIYRLKKNIEFIIVYRRGKSFANKTLVLYVLKNKRNKDKDGIAYSKVGISVSKKVGNSVVRSKCKRLLSESFRLNYNNILKGYDCVFVARNPIRDSNYFETEKAMKNLIKKAGLYYDEENGIKSN.

Belongs to the RnpA family. In terms of assembly, consists of a catalytic RNA component (M1 or rnpB) and a protein subunit.

The catalysed reaction is Endonucleolytic cleavage of RNA, removing 5'-extranucleotides from tRNA precursor.. Functionally, RNaseP catalyzes the removal of the 5'-leader sequence from pre-tRNA to produce the mature 5'-terminus. It can also cleave other RNA substrates such as 4.5S RNA. The protein component plays an auxiliary but essential role in vivo by binding to the 5'-leader sequence and broadening the substrate specificity of the ribozyme. This chain is Ribonuclease P protein component, found in Clostridium botulinum (strain Eklund 17B / Type B).